Here is a 1138-residue protein sequence, read N- to C-terminus: MSRRFTVTSLPPAASAASADPESRRHSVADPRRLPREDVKGDGNPKESSPFINSTDTEKGREYDGRNMALFEEEMDTSPMVSSLLSGLANYTNLPQGSREHEEAENNEGGKKKPVQAPRMGTFMGVYLPCLQNIFGVILFLRLTWVVGIAGIMESFCMVFICCSCTMLTAISMSAIATNGVVPAGGSYYMISRSLGPEFGGAVGLCFYLGTTFAGAMYILGTIEILLAYLFPAMAIFKAEDASGEAAAMLNNMRVYGTCVLTCMATVVFVGVKYVNKFALVFLGCVILSILAIYAGVIKSAFDPPNFPICLLGNRTLSRHGFDVCAKLAWEGNETVTTRLWGLFCSSRLLNATCDEYFTRNNVTEIQGIPGAASGLIKENLWSSYLTKGVIVERRGMPSVGLADGTPVDMDHPYVFSDMTSYFTLLVGIYFPSVTGIMAGSNRSGDLRDAQKSIPTGTILAIATTSAVYISSVVLFGACIEGVVLRDKFGEAVNGNLVVGTLAWPSPWVIVIGSFFSTCGAGLQSLTGAPRLLQAISRDGIVPFLQVFGHGKANGEPTWALLLTACICEIGILIASLDEVAPILSMFFLMCYMFVNLACAVQTLLRTPNWRPRFRYYHWTLSFLGMSLCLALMFICSWYYALVAMLIAGLIYKYIEYRGAEKEWGDGIRGLSLSAARYALLRLEEGPPHTKNWRPQLLVLVRVDQDQNVVHPQLLSLTSQLKAGKGLTIVGSVLEGTFLDNHPQAQRAEESIRRLMEAEKVKGFCQVVISSNLRDGVSHLIQSGGLGGLQHNTVLVGWPRNWRQKEDHQTWRNFIELVRETTAGHLALLVTKNVSMFPGNPERFSEGSIDVWWIVHDGGMLMLLPFLLRHHKVWRKCKMRIFTVAQMDDNSIQMKKDLTTFLYHLRITAEVEVVEMHESDISAYTYEKTLVMEQRSQILKQMHLTKNEREREIQSITDESRGSIRRKNPANPRLRLNVPEETACDNEEKPEEEVQLIHDQSAPSCPSSSPSPGEEPEGERETDPEVHLTWTKDKSVAEKNKGPSPVSSEGIKDFFSMKPEWENLNQSNVRRMHTAVRLNEVIVNKSRDAKLVLLNMPGPPRNRNGDENYMEFLEVLTEQLDRVMLVRGGGREVITIYS.

Disordered stretches follow at residues 1 to 62 (MSRR…KGRE) and 96 to 116 (QGSR…KPVQ). The Cytoplasmic portion of the chain corresponds to 1-98 (MSRRFTVTSL…ANYTNLPQGS (98 aa)). The segment covering 21-45 (PESRRHSVADPRRLPREDVKGDGNP) has biased composition (basic and acidic residues). Residues 46–55 (KESSPFINST) show a composition bias toward polar residues. Phosphothreonine is present on T57. The span at 98 to 111 (SREHEEAENNEGGK) shows a compositional bias: basic and acidic residues. The discontinuously helical transmembrane segment at 99–120 (REHEEAENNEGGKKKPVQAPRM) threads the bilayer. K113 is a K(+) binding site. At 121 to 129 (GTFMGVYLP) the chain is on the extracellular side. A helical membrane pass occupies residues 130–151 (CLQNIFGVILFLRLTWVVGIAG). Over 152–174 (IMESFCMVFICCSCTMLTAISMS) the chain is Cytoplasmic. The helical transmembrane segment at 175–203 (AIATNGVVPAGGSYYMISRSLGPEFGGAV) threads the bilayer. A chloride-binding site is contributed by A184. Topologically, residues 204-229 (GLCFYLGTTFAGAMYILGTIEILLAY) are extracellular. The next 2 membrane-spanning stretches (helical) occupy residues 230–250 (LFPA…AAML) and 251–276 (NNMR…KYVN). The Extracellular segment spans residues 277–402 (KFALVFLGCV…ERRGMPSVGL (126 aa)). Cysteines 310 and 325 form a disulfide. N-linked (GlcNAc...) asparagine glycans are attached at residues N314, N333, N351, and N362. Cysteines 345 and 354 form a disulfide. Residues 403–420 (ADGTPVDMDHPYVFSDMT) form a helical membrane-spanning segment. Residue M410 participates in K(+) binding. Chloride contacts are provided by Y414 and V415. Residues 421-429 (SYFTLLVGI) are Cytoplasmic-facing. Residues 430–453 (YFPSVTGIMAGSNRSGDLRDAQKS) traverse the membrane as a helical segment. D446 is a K(+) binding site. Residues 454-485 (IPTGTILAIATTSAVYISSVVLFGACIEGVVL) lie on the Extracellular side of the membrane. The helical transmembrane segment at 486 to 513 (RDKFGEAVNGNLVVGTLAWPSPWVIVIG) threads the bilayer. Residues 514-534 (SFFSTCGAGLQSLTGAPRLLQ) lie on the Cytoplasmic side of the membrane. Helical transmembrane passes span 535–555 (AISR…KANG) and 556–578 (EPTW…ASLD). A chloride-binding site is contributed by E569. The Cytoplasmic segment spans residues 579–592 (EVAPILSMFFLMCY). A run of 2 helical transmembrane segments spans residues 593–615 (MFVN…PRFR) and 616–632 (YYHW…CLAL). The Cytoplasmic segment spans residues 633–1138 (MFICSWYYAL…GGREVITIYS (506 aa)). The segment at 667–681 (GIRGLSLSAARYALL) is scissor helix. Phosphothreonine; by OXSR1 and STK39 is present on T929. Residues 943–1051 (HLTKNERERE…GPSPVSSEGI (109 aa)) form a disordered region. Positions 945–962 (TKNEREREIQSITDESRG) are enriched in basic and acidic residues. The segment covering 982-994 (TACDNEEKPEEEV) has biased composition (acidic residues). A compositionally biased stretch (low complexity) spans 1001–1012 (SAPSCPSSSPSP). Basic and acidic residues predominate over residues 1019 to 1041 (ERETDPEVHLTWTKDKSVAEKNK). The residue at position 1029 (T1029) is a Phosphothreonine; by OXSR1 and STK39. Residues S1044, S1047, and S1048 each carry the phosphoserine modification.

The protein belongs to the SLC12A transporter family. K/Cl co-transporter subfamily. Homodimer; adopts a domain-swap conformation at the scissor helices connecting the transmembrane domain and C-terminal domain. Heterodimer with K-Cl cotransporters SLC12A6 and SLC12A7. Interacts with AP2A1. Phosphorylated at Thr-929 and Thr-1029 by OXSR1/OSR1 and STK39/SPAK downstream of WNK kinases (WNK1, WNK2, WNK3 or WNK4), inhibiting the potassium-chloride cotransport activity. As to expression, expressed in brainstem, spinal cord and olfactory bulb of 17 dpc embryos. Expressed in all parts of the brain and spinal cord in postnatal day 14 mice. Expressed in brainstem and spinal cord of 17 dpc embryos. Expressed in all parts of the brain and spinal cord in postnatal day 14 mice.

The protein resides in the cell membrane. The protein localises to the cell projection. It localises to the dendrite. It carries out the reaction K(+)(in) + chloride(in) = K(+)(out) + chloride(out). With respect to regulation, inhibited following phosphorylation by OXSR1/OSR1 and STK39/SPAK: phosphorylation takes place downstream of WNK kinases (WNK1, WNK2, WNK3 or WNK4) in response to hyperosmotic stress and subsequent cell shrinkage. Mediates electroneutral potassium-chloride cotransport in mature neurons and is required for neuronal Cl(-) homeostasis. As major extruder of intracellular chloride, it establishes the low neuronal Cl(-) levels required for chloride influx after binding of GABA-A and glycine to their receptors, with subsequent hyperpolarization and neuronal inhibition. Involved in the regulation of dendritic spine formation and maturation. The sequence is that of Solute carrier family 12 member 5 (Slc12a5) from Mus musculus (Mouse).